The primary structure comprises 649 residues: Leucine-rich repeat transmembrane protein FLRT3 (649 aa).

The first 28 residues, Met-1–Ala-28, serve as a signal peptide directing secretion. An LRRNT domain is found at Lys-29–Glu-58. Topologically, residues Lys-29 to Pro-528 are extracellular. 2 disulfides stabilise this stretch: Cys-31–Cys-37 and Cys-35–Cys-44. Positions Asp-38–Asn-67 are interaction with ADGRL3. LRR repeat units follow at residues Asp-59–Lys-80, Lys-84–Lys-104, Tyr-105–Lys-126, Tyr-129–Phe-150, Tyr-155–Arg-175, Thr-176–Gly-197, Ser-200–Val-220, Asn-226–Thr-247, Asn-248–Tyr-269, and Gln-272–Asp-293. Residue Asn-226 is glycosylated (N-linked (GlcNAc...) asparagine). Residues Asn-282 and Asn-296 are each glycosylated (N-linked (GlcNAc...) asparagine). In terms of domain architecture, LRRCT spans Asn-305–Asp-357. A disulfide bridge links Cys-309 with Cys-334. Residues Lys-387–Ser-407 form a disordered region. Residues Pro-389–Gln-401 are compositionally biased toward basic and acidic residues. The region spanning Lys-409–Leu-504 is the Fibronectin type-III domain. Residues Leu-529 to Cys-549 traverse the membrane as a helical segment. Over Trp-550 to Ser-649 the chain is Cytoplasmic. Positions Leu-622–Ser-649 are disordered.

As to quaternary structure, monomer and homodimer. Self-associates (via leucine-rich repeats), giving rise to homooligomers. Interacts with FGFR1. Interacts (via extracellular domain) with ADGRL1/LPHN1 and LPHN2 (via olfactomedin-like domain). Interacts (via extracellular domain) with ADGRL3 (via olfactomedin-like domain); the interaction is direct. Interacts (via extracellular domain) with UNC5B and UNC5D (via extracellular domain); the interaction is direct. Identified in complexes composed of FLRT3, ADGRL3 and UNC5B, respectively FLRT3, ADGRL3 and UNC5D. May also interact (via extracellular domain) with UNC5A and UNC5C. Interacts (via cytoplasmic domain) with ROBO1. N-glycosylated. Post-translationally, proteolytic cleavage in the juxtamembrane region gives rise to a soluble ectodomain. Cleavage is probably effected by a metalloprotease. As to expression, expressed in kidney, brain, pancreas, skeletal muscle, lung, liver, placenta, and heart.

The protein resides in the cell membrane. The protein localises to the presynaptic cell membrane. It is found in the endoplasmic reticulum membrane. Its subcellular location is the cell junction. It localises to the focal adhesion. The protein resides in the secreted. The protein localises to the cell projection. It is found in the axon. Its subcellular location is the growth cone membrane. In terms of biological role, functions in cell-cell adhesion, cell migration and axon guidance, exerting an attractive or repulsive role depending on its interaction partners. Plays a role in the spatial organization of brain neurons. Plays a role in vascular development in the retina. Plays a role in cell-cell adhesion via its interaction with ADGRL3 and probably also other latrophilins that are expressed at the surface of adjacent cells. Interaction with the intracellular domain of ROBO1 mediates axon attraction towards cells expressing NTN1. Mediates axon growth cone collapse and plays a repulsive role in neuron guidance via its interaction with UNC5B, and possibly also other UNC-5 family members. Promotes neurite outgrowth (in vitro). Mediates cell-cell contacts that promote an increase both in neurite number and in neurite length. Plays a role in the regulation of the density of glutamaergic synapses. Plays a role in fibroblast growth factor-mediated signaling cascades. Required for normal morphogenesis during embryonic development, but not for normal embryonic patterning. Required for normal ventral closure, headfold fusion and definitive endoderm migration during embryonic development. Required for the formation of a normal basement membrane and the maintenance of a normal anterior visceral endoderm during embryonic development. The chain is Leucine-rich repeat transmembrane protein FLRT3 (FLRT3) from Homo sapiens (Human).